A 131-amino-acid polypeptide reads, in one-letter code: Gem-associated protein 7 (131 aa).

Position 1 is an N-acetylmethionine (M1). The 29-residue stretch at 1–29 (MQTPVNIPVPVLRLPRGPDGFSRGFAPDG) folds into the SUZ-C domain. T3 carries the phosphothreonine modification. The region spanning 65 to 131 (RYLRSLLAMV…SDIISYTFKP (67 aa)) is the Sm domain.

It belongs to the gemin-7 family. Part of the core SMN complex that contains SMN1, GEMIN2/SIP1, DDX20/GEMIN3, GEMIN4, GEMIN5, GEMIN6, GEMIN7, GEMIN8 and STRAP/UNRIP. Part of the SMN-Sm complex that contains SMN1, GEMIN2/SIP1, DDX20/GEMIN3, GEMIN4, GEMIN5, GEMIN6, GEMIN7, GEMIN8, STRAP/UNRIP and the Sm proteins SNRPB, SNRPD1, SNRPD2, SNRPD3, SNRPE, SNRPF and SNRPG. Interacts with GEMIN6; the interaction is direct. Interacts with STRAP/UNRIP; the interaction is direct. Interacts with GEMIN8; the interaction is direct. Interacts with SNRPB, SNRPD2, SNRPD3 and SNRPE; the interaction is direct.

It localises to the nucleus. Its subcellular location is the nucleoplasm. The protein localises to the gem. The protein resides in the cytoplasm. The SMN complex catalyzes the assembly of small nuclear ribonucleoproteins (snRNPs), the building blocks of the spliceosome, and thereby plays an important role in the splicing of cellular pre-mRNAs. Most spliceosomal snRNPs contain a common set of Sm proteins SNRPB, SNRPD1, SNRPD2, SNRPD3, SNRPE, SNRPF and SNRPG that assemble in a heptameric protein ring on the Sm site of the small nuclear RNA to form the core snRNP (Sm core). In the cytosol, the Sm proteins SNRPD1, SNRPD2, SNRPE, SNRPF and SNRPG are trapped in an inactive 6S pICln-Sm complex by the chaperone CLNS1A that controls the assembly of the core snRNP. To assemble core snRNPs, the SMN complex accepts the trapped 5Sm proteins from CLNS1A forming an intermediate. Binding of snRNA inside 5Sm triggers eviction of the SMN complex, thereby allowing binding of SNRPD3 and SNRPB to complete assembly of the core snRNP. In Homo sapiens (Human), this protein is Gem-associated protein 7 (GEMIN7).